The primary structure comprises 314 residues: Palmitoyl-protein thioesterase 1 (314 aa).

The first 25 residues, 1-25 (MISICCSRFSCILFLLFLIFSLVLS), serve as a signal peptide directing secretion. 3 cysteine pairs are disulfide-bonded: Cys53–Cys54, Cys104–Cys136, and Cys160–Cys168. Ser123 (nucleophile) is an active-site residue. An N-linked (GlcNAc...) asparagine glycan is attached at Asn240. Catalysis depends on residues Asp241 and His295.

Belongs to the palmitoyl-protein thioesterase family. Ubiquitously expressed.

Its subcellular location is the lysosome. It catalyses the reaction S-hexadecanoyl-L-cysteinyl-[protein] + H2O = L-cysteinyl-[protein] + hexadecanoate + H(+). Functionally, cleaves thioester-linked long fatty acyl groups such as palmitate from modified cysteine residues in proteins or peptides. The chain is Palmitoyl-protein thioesterase 1 (Ppt1) from Drosophila melanogaster (Fruit fly).